Here is a 218-residue protein sequence, read N- to C-terminus: MAKVHITNVVVLDNPSSFFNPFQFELTFECIEELKEDLEWKMIYVGSAESEEHDQVLDTIYVGPVPEGRHIFVFQADPPDVSKIPEPDAVGVTIVLLTCSYRGQEFVRVGYYVNNDYADPEMRENPPTKPLFEKLTRNILASKPRVTRFKINWDYGHINGNGNGVENGHQDEMATDGPSTSEAASAVIHPEDDNSLAMPMENGIKALNENSNSLAMEC.

S211 and S213 each carry phosphoserine.

The protein belongs to the ASF1 family. In terms of assembly, component of the replication coupling assembly factor (RCAF), composed of asf1, histone H3 and histone H4. Interacts with the Caf1-105 subunit of the CAF-1 complex. Interacts with brm, mor and tlk. Interacts with Daxx. Post-translationally, phosphorylated on undefined residues by tlk.

It is found in the nucleus. The protein resides in the chromosome. Its function is as follows. Histone chaperone that facilitates histone deposition and histone exchange and removal during nucleosome assembly and disassembly. Cooperates with chromatin assembly factor 1 (CAF-1) to promote replication-dependent chromatin assembly. Plays a role in the formation of silent heterochromatin. This is Histone chaperone asf1 (asf1) from Drosophila melanogaster (Fruit fly).